We begin with the raw amino-acid sequence, 221 residues long: Iron-sulfur cluster repair protein YtfE (221 aa).

Belongs to the RIC family. YtfE subfamily. Homodimer.

The protein localises to the cytoplasm. Functionally, di-iron-containing protein involved in the repair of iron-sulfur clusters damaged by oxidative and nitrosative stress conditions. The protein is Iron-sulfur cluster repair protein YtfE of Dickeya chrysanthemi (strain Ech1591) (Dickeya zeae (strain Ech1591)).